Here is a 723-residue protein sequence, read N- to C-terminus: ADP-ribosylation factor-binding protein GGA3 (723 aa).

Positions 1-313 are binds to ARF1 (in long isoform); that stretch reads MAEAEGESLE…GEVATLTLPD (313 aa). The 131-residue stretch at 16 to 146 folds into the VHS domain; the sequence is ATNPSNRQED…MLKRQGIVQS (131 aa). A phosphoserine mark is found at S159 and S275. Residues 171–298 form the GAT domain; sequence DEEKSKLLAK…VINSYKTIIE (128 aa). Positions 299–593 are unstructured hinge; that stretch reads GQVINGEVAT…IHVPLESIKP (295 aa). The interval 339 to 384 is disordered; the sequence is SSVLAPAPTPPSSGIPILPPPPQASGPPRSRSSSQAEATLGPSSTS. Over residues 345–363 the composition is skewed to pro residues; the sequence is APTPPSSGIPILPPPPQAS. The span at 364–374 shows a compositional bias: low complexity; it reads GPPRSRSSSQA. A DXXLL motif is present at residues 391–395; that stretch reads DEELL. The interval 428 to 464 is disordered; the sequence is DFFSPRPGTAACGASDAPLLQPSAPSSSSSQAPLPPP. Over residues 441–459 the composition is skewed to low complexity; the sequence is ASDAPLLQPSAPSSSSSQA. The GAE domain maps to 594-715; sequence SSALPVTAYD…TEVGEVDQFP (122 aa).

The protein belongs to the GGA protein family. As to quaternary structure, monomer. Interacts with GGA1 and GGA2. Binds to clathrin and activated ARFs, such as ARF1, ARF5 and ARF6. Binds RABEP1 and RABGEF1. Interacts with the membrane proteins M6PR/CD-MPR and IGF2R/CI-MPR and the accessory proteins SYNRG, EPN4, NECAP1, NECAP2 and AFTPH/aftiphilin. Interacts with TSG101 and UBC. Interacts with ADRA2B. Interacts with NTRK1; the interaction is independent of NTRK1 activation and ubiquitination. Interacts (via VHS domain) with BACE1 (via DXXLL motif). Post-translationally, phosphorylated by CK2 and dephosphorylated by PP2A. Phosphorylation of GGA3 allows the internal DXXLL motif to bind the VHS domain and to inhibit the recognition of cargo signals. In terms of processing, ubiquitinated. Proteolytically cleaved during apoptosis by CASP3. Ubiquitously expressed.

It localises to the golgi apparatus. It is found in the trans-Golgi network membrane. The protein resides in the endosome membrane. The protein localises to the early endosome membrane. Its subcellular location is the recycling endosome membrane. Plays a role in protein sorting and trafficking between the trans-Golgi network (TGN) and endosomes. Mediates the ARF-dependent recruitment of clathrin to the TGN and binds ubiquitinated proteins and membrane cargo molecules with a cytosolic acidic cluster-dileucine (DXXLL) motif. Mediates export of the GPCR receptor ADRA2B to the cell surface. nvolved in BACE1 transport and sorting as well as regulation of BACE1 protein levels. Regulates retrograde transport of BACE1 from endosomes to the trans-Golgi network via interaction through the VHS motif and dependent of BACE1 phosphorylation. Modulates BACE1 protein levels independently of the interaction between VHS domain and DXXLL motif through recognition of ubiquitination. Key player in a novel DXXLL-mediated endosomal sorting machinery to the recycling pathway that targets NTRK1 to the plasma membrane. The polypeptide is ADP-ribosylation factor-binding protein GGA3 (Homo sapiens (Human)).